Here is a 366-residue protein sequence, read N- to C-terminus: Histidinol-phosphate aminotransferase 2 (366 aa).

Position 226 is an N6-(pyridoxal phosphate)lysine (Lys226).

Belongs to the class-II pyridoxal-phosphate-dependent aminotransferase family. Histidinol-phosphate aminotransferase subfamily. Homodimer. Pyridoxal 5'-phosphate serves as cofactor.

The enzyme catalyses L-histidinol phosphate + 2-oxoglutarate = 3-(imidazol-4-yl)-2-oxopropyl phosphate + L-glutamate. It participates in amino-acid biosynthesis; L-histidine biosynthesis; L-histidine from 5-phospho-alpha-D-ribose 1-diphosphate: step 7/9. The protein is Histidinol-phosphate aminotransferase 2 of Haemophilus influenzae (strain 86-028NP).